Here is a 479-residue protein sequence, read N- to C-terminus: Mitochondria-eating protein (479 aa).

2 coiled-coil regions span residues 109–161 (ERKL…LATT) and 187–223 (LRRL…RIAR). 2 disordered regions span residues 220 to 251 (RIAR…GRAR) and 456 to 479 (RSRS…SRSR). Residues 235–249 (RSPSPLPLRSCSPGR) are compositionally biased toward low complexity.

The protein belongs to the MIEAP family.

It localises to the cytoplasm. The protein resides in the cytosol. Its subcellular location is the mitochondrion outer membrane. The protein localises to the mitochondrion matrix. In terms of biological role, key regulator of mitochondrial quality that mediates the repairing or degradation of unhealthy mitochondria in response to mitochondrial damage. Mediator of mitochondrial protein catabolic process (also named MALM) by mediating the degradation of damaged proteins inside mitochondria by promoting the accumulation in the mitochondrial matrix of hydrolases that are characteristic of the lysosomal lumen. Also involved in mitochondrion degradation of damaged mitochondria by promoting the formation of vacuole-like structures (named MIV), which engulf and degrade unhealthy mitochondria by accumulating lysosomes. Binds cardiolipin. May form molecular condensates (non-membrane-bounded organelles) within mitochondria that compartmentalize and promote cardiolipin metabolism. This Gallus gallus (Chicken) protein is Mitochondria-eating protein (SPATA18).